We begin with the raw amino-acid sequence, 366 residues long: MLKRTPLYDVYKEYGGKTIDFGGWELPVQFSSIKEEHEAVRTKAGLFDVSHMGEVEVSGKDALSFLQKMMTNDVADLKPGNALYTAMCYPDGGTVDDLLIYQKSESCYLLVINASNIEKDIAWLTEHTEGDVTLTNQSDGISLLAVQGPNAQSVLAKLTECDLSSLKPFTFIDKADVAGRQVLLSRTGYTGEDGFELYCRNEDAVHLFKEILAAGEHEGLVPCGLGARDTLRFEAKLALYGQELTKDITPIEAGIGFAVKHKKDSDFFGKSVLREQKEKGAPRKLVGLEMIEKGIPRHGYAVKKDGVPIGEVTTGTQSPTLKKNIGLALIKTEFSEVGTEVEVEIRKKTVKAKIVRTPFYKRPKQS.

The protein belongs to the GcvT family. As to quaternary structure, the glycine cleavage system is composed of four proteins: P, T, L and H.

It carries out the reaction N(6)-[(R)-S(8)-aminomethyldihydrolipoyl]-L-lysyl-[protein] + (6S)-5,6,7,8-tetrahydrofolate = N(6)-[(R)-dihydrolipoyl]-L-lysyl-[protein] + (6R)-5,10-methylene-5,6,7,8-tetrahydrofolate + NH4(+). In terms of biological role, the glycine cleavage system catalyzes the degradation of glycine. The polypeptide is Aminomethyltransferase (Bacillus velezensis (strain DSM 23117 / BGSC 10A6 / LMG 26770 / FZB42) (Bacillus amyloliquefaciens subsp. plantarum)).